The chain runs to 508 residues: NAD(P)H-quinone oxidoreductase subunit 2 B, chloroplastic (508 aa).

13 helical membrane-spanning segments follow: residues 24 to 44 (LLLF…GLIL), 59 to 79 (WLYF…LFRW), 99 to 119 (IFQF…VEYI), 124 to 144 (MAIT…MFLC), 149 to 169 (FITI…LSGY), 184 to 204 (LLMG…LYGL), 227 to 247 (PGIS…LSPA), 295 to 315 (WHLL…LIAI), 323 to 343 (MLAY…IVGD), 354 to 374 (YMLF…LFGL), 395 to 415 (ALSL…AGFF), 418 to 438 (LYLF…IGLL), and 482 to 502 (MIVC…IIAI).

The protein belongs to the complex I subunit 2 family. NDH is composed of at least 16 different subunits, 5 of which are encoded in the nucleus.

The protein resides in the plastid. Its subcellular location is the chloroplast thylakoid membrane. The catalysed reaction is a plastoquinone + NADH + (n+1) H(+)(in) = a plastoquinol + NAD(+) + n H(+)(out). It catalyses the reaction a plastoquinone + NADPH + (n+1) H(+)(in) = a plastoquinol + NADP(+) + n H(+)(out). NDH shuttles electrons from NAD(P)H:plastoquinone, via FMN and iron-sulfur (Fe-S) centers, to quinones in the photosynthetic chain and possibly in a chloroplast respiratory chain. The immediate electron acceptor for the enzyme in this species is believed to be plastoquinone. Couples the redox reaction to proton translocation, and thus conserves the redox energy in a proton gradient. This chain is NAD(P)H-quinone oxidoreductase subunit 2 B, chloroplastic, found in Ipomoea purpurea (Common morning glory).